The following is a 327-amino-acid chain: Flap endonuclease 1 (327 aa).

The tract at residues 1 to 100 (MGNADLRQLA…DEIADRREQR (100 aa)) is N-domain. Residues Asp-28, Asp-82, Glu-154, Glu-156, Asp-176, Asp-178, and Asp-226 each contribute to the Mg(2+) site. The tract at residues 118–247 (EAARLDARTQ…TALDAIGEHG (130 aa)) is I-domain. Residues 319-327 (AQTGLDRWT) are interaction with PCNA.

The protein belongs to the XPG/RAD2 endonuclease family. FEN1 subfamily. As to quaternary structure, interacts with PCNA. PCNA stimulates the nuclease activity without altering cleavage specificity. The cofactor is Mg(2+).

Functionally, structure-specific nuclease with 5'-flap endonuclease and 5'-3' exonuclease activities involved in DNA replication and repair. During DNA replication, cleaves the 5'-overhanging flap structure that is generated by displacement synthesis when DNA polymerase encounters the 5'-end of a downstream Okazaki fragment. Binds the unpaired 3'-DNA end and kinks the DNA to facilitate 5' cleavage specificity. Cleaves one nucleotide into the double-stranded DNA from the junction in flap DNA, leaving a nick for ligation. Also involved in the base excision repair (BER) pathway. Acts as a genome stabilization factor that prevents flaps from equilibrating into structures that lead to duplications and deletions. Also possesses 5'-3' exonuclease activity on nicked or gapped double-stranded DNA. This is Flap endonuclease 1 from Halobacterium salinarum (strain ATCC 29341 / DSM 671 / R1).